The primary structure comprises 704 residues: Capsule polysaccharide modification protein LipA (704 aa).

It is found in the cell inner membrane. Involved in the phospholipid modification of the capsular polysaccharide, a strong requirement for its translocation to the cell surface. The sequence is that of Capsule polysaccharide modification protein LipA (lipA) from Neisseria meningitidis serogroup B (strain ATCC BAA-335 / MC58).